We begin with the raw amino-acid sequence, 172 residues long: Adenine phosphoribosyltransferase (172 aa).

This sequence belongs to the purine/pyrimidine phosphoribosyltransferase family. Homodimer.

The protein localises to the cytoplasm. The enzyme catalyses AMP + diphosphate = 5-phospho-alpha-D-ribose 1-diphosphate + adenine. The protein operates within purine metabolism; AMP biosynthesis via salvage pathway; AMP from adenine: step 1/1. In terms of biological role, catalyzes a salvage reaction resulting in the formation of AMP, that is energically less costly than de novo synthesis. This is Adenine phosphoribosyltransferase from Synechocystis sp. (strain ATCC 27184 / PCC 6803 / Kazusa).